An 82-amino-acid polypeptide reads, in one-letter code: Diphthamide biosynthesis protein 3 (82 aa).

One can recognise a DPH-type MB domain in the interval 3–59; sequence TYDEIEIEDMTFEPENQMFTYPCPCGDRFQIYLDDMFEGEKVAVCPSCSLMIDVVFD. Residues cysteine 25, cysteine 27, cysteine 47, and cysteine 50 each coordinate Fe cation. The tract at residues 66–82 is required for interaction with the elongator complex; the sequence is YYEEAGIHPPEPIAAAA.

Belongs to the DPH3 family. In terms of assembly, component of the 2-(3-amino-3-carboxypropyl)histidine synthase complex composed of DPH1, DPH2, KTI11/DPH3 and a NADH-dependent reductase, predominantly CBR1. Interacts with DPH1. Interacts with DPH2. Interacts with CBR1. Interacts with elongation factor 2. Interacts with ATS1/KTI13; the interaction is direct. Interacts with the 40S ribosomal protein RPS7A. Interacts with the 40S ribosomal protein RPS19A. Interacts with the elongator complex subunit IKI3/ELP1. Interacts with the elongator complex subunit ELP2. Interacts with the elongator complex subunit ELP3. Interacts with the elongator complex subunit ELP5.

It localises to the cytoplasm. The protein resides in the nucleus. The catalysed reaction is [3Fe-4S](1+)-[protein] + Fe(2+)-[Dph3] = [3Fe-4S](0)-[protein] + Fe(3+)-[Dph3]. It catalyses the reaction 2 [3Fe-4S](0)-[protein] + 2 Fe(2+)-[Dph3] + NADH = 2 [4Fe-4S](1+)-[protein] + 2 [Dph3] + NAD(+) + H(+). It participates in protein modification; peptidyl-diphthamide biosynthesis. Its function is as follows. Required for the first step of diphthamide biosynthesis, a post-translational modification of histidine which occurs in elongation factor 2. DPH1 and DPH2 transfer a 3-amino-3-carboxypropyl (ACP) group from S-adenosyl-L-methionine (SAM) to a histidine residue, the reaction is assisted by a reduction system comprising KTI11/DPH3 and a NADH-dependent reductase, predominantly CBR1. Acts as an electron donor to reduce the Fe-S cluster in DPH1-DPH2 keeping the [4Fe-4S] clusters in the active and reduced state. Restores iron to DPH1-DPH2 iron-sulfur clusters which have degraded from [4Fe-4S] to [3Fe-4S] by donating an iron atom to reform [4Fe-4S] clusters, in a manner dependent on the presence of elongation factor 2 and SAM. Together with ATS1; associates with the elongator complex and is required for tRNA Wobble base modifications mediated by the elongator complex. The elongator complex is required for multiple tRNA modifications, including mcm5U (5-methoxycarbonylmethyl uridine), mcm5s 2U (5-methoxycarbonylmethyl-2-thiouridine), and ncm5U (5-carbamoylmethyl uridine). This Saccharomyces cerevisiae (strain ATCC 204508 / S288c) (Baker's yeast) protein is Diphthamide biosynthesis protein 3.